Here is a 208-residue protein sequence, read N- to C-terminus: Glutathione S-transferase (208 aa).

The GST N-terminal domain occupies Met-1–Gly-78. Glutathione is bound by residues Tyr-7, Lys-42, Gln-49–Leu-50, and Gln-62–Ser-63. The region spanning Asn-80–Met-200 is the GST C-terminal domain.

It belongs to the GST superfamily. Pi family. Homodimer.

The catalysed reaction is RX + glutathione = an S-substituted glutathione + a halide anion + H(+). In terms of biological role, conjugation of reduced glutathione to a wide number of exogenous and endogenous hydrophobic electrophiles. This Dirofilaria immitis (Canine heartworm) protein is Glutathione S-transferase.